We begin with the raw amino-acid sequence, 631 residues long: DNA mismatch repair protein MutL (631 aa).

The protein belongs to the DNA mismatch repair MutL/HexB family.

This protein is involved in the repair of mismatches in DNA. It is required for dam-dependent methyl-directed DNA mismatch repair. May act as a 'molecular matchmaker', a protein that promotes the formation of a stable complex between two or more DNA-binding proteins in an ATP-dependent manner without itself being part of a final effector complex. The chain is DNA mismatch repair protein MutL from Mannheimia succiniciproducens (strain KCTC 0769BP / MBEL55E).